Consider the following 151-residue polypeptide: Small ribosomal subunit protein uS15 (151 aa).

This sequence belongs to the universal ribosomal protein uS15 family. In terms of assembly, component of the small ribosomal subunit.

Its subcellular location is the cytoplasm. Its function is as follows. Component of the small ribosomal subunit. The ribosome is a large ribonucleoprotein complex responsible for the synthesis of proteins in the cell. The chain is Small ribosomal subunit protein uS15 (rps13) from Gillichthys mirabilis (Long-jawed mudsucker).